The chain runs to 381 residues: Chymosin (381 aa).

Residues 1–16 form the signal peptide; the sequence is MRCLVVLLAALALSQA. Positions 17 to 58 are cleaved as a propeptide — activation peptide; it reads SGITRIPLHKGKTLRKALKERGLLEDFLQRQQYAVSSKYSSL. Residues 74–378 form the Peptidase A1 domain; that stretch reads YFGKIYIGTP…DRANNRVGLA (305 aa). Residue Asp-92 is part of the active site. Cys-105 and Cys-110 are disulfide-bonded. Asn-158 carries N-linked (GlcNAc...) asparagine glycosylation. A disulfide bridge connects residues Cys-265 and Cys-269. Asp-274 is an active-site residue. Cys-308 and Cys-341 are disulfide-bonded. Residue Asn-349 is glycosylated (N-linked (GlcNAc...) asparagine).

This sequence belongs to the peptidase A1 family.

It carries out the reaction Broad specificity similar to that of pepsin A. Clots milk by cleavage of a single 104-Ser-Phe-|-Met-Ala-107 bond in kappa-chain of casein.. Functionally, chymosin is synthesized in the mucosa of the abomasum (fourth stomach) of young (unweaned) ruminants. The enzyme hydrolyzes casein to paracasein. This chain is Chymosin, found in Camelus dromedarius (Dromedary).